A 249-amino-acid chain; its full sequence is Cyclin-dependent kinase inhibitor 2 (249 aa).

The interval 118–180 is disordered; it reads KVCTQAGEDH…MCRRSSTTSA (63 aa). The span at 161-180 shows a compositional bias: polar residues; sequence AESNQEAKQQMCRRSSTTSA.

This sequence belongs to the CDI family. ICK/KRP subfamily.

This Oryza sativa subsp. japonica (Rice) protein is Cyclin-dependent kinase inhibitor 2 (KRP2).